The following is a 463-amino-acid chain: Chromosomal replication initiator protein DnaA (463 aa).

The domain I, interacts with DnaA modulators stretch occupies residues 1-83 (MSTNQIILTD…LQLFQHYNNT (83 aa)). The segment at 83–124 (TIKSVEIITKELPGTSKTVIELPTKTFADIGSSELNAENIFS) is domain II. A domain III, AAA+ region region spans residues 125–343 (TLDVRFTFDN…GALNKVIAHS (219 aa)). G171, G173, K174, and T175 together coordinate ATP. Residues 344–463 (NFTLKEITLE…INLLMKILQN (120 aa)) are domain IV, binds dsDNA.

This sequence belongs to the DnaA family. In terms of assembly, oligomerizes as a right-handed, spiral filament on DNA at oriC.

It localises to the cytoplasm. Plays an essential role in the initiation and regulation of chromosomal replication. ATP-DnaA binds to the origin of replication (oriC) to initiate formation of the DNA replication initiation complex once per cell cycle. Binds the DnaA box (a 9 base pair repeat at the origin) and separates the double-stranded (ds)DNA. Forms a right-handed helical filament on oriC DNA; dsDNA binds to the exterior of the filament while single-stranded (ss)DNA is stabiized in the filament's interior. The ATP-DnaA-oriC complex binds and stabilizes one strand of the AT-rich DNA unwinding element (DUE), permitting loading of DNA polymerase. After initiation quickly degrades to an ADP-DnaA complex that is not apt for DNA replication. Binds acidic phospholipids. In Rickettsia canadensis (strain McKiel), this protein is Chromosomal replication initiator protein DnaA.